Consider the following 563-residue polypeptide: Arginine--tRNA ligase (563 aa).

The 'HIGH' region signature appears at 121-131; it reads PNIAKPFSIGH.

This sequence belongs to the class-I aminoacyl-tRNA synthetase family. Monomer.

The protein localises to the cytoplasm. The enzyme catalyses tRNA(Arg) + L-arginine + ATP = L-arginyl-tRNA(Arg) + AMP + diphosphate. This chain is Arginine--tRNA ligase, found in Streptococcus pneumoniae (strain Hungary19A-6).